The primary structure comprises 206 residues: Large ribosomal subunit protein uL22m (206 aa).

A mitochondrion-targeting transit peptide spans 1-40; that stretch reads MAAAVLGQLGALWIHNLRSRGKLALGVLPQSYIHTSASLD.

It belongs to the universal ribosomal protein uL22 family. Component of the mitochondrial large ribosomal subunit (mt-LSU). Mature mammalian 55S mitochondrial ribosomes consist of a small (28S) and a large (39S) subunit. The 28S small subunit contains a 12S ribosomal RNA (12S mt-rRNA) and 30 different proteins. The 39S large subunit contains a 16S rRNA (16S mt-rRNA), a copy of mitochondrial valine transfer RNA (mt-tRNA(Val)), which plays an integral structural role, and 52 different proteins.

It localises to the mitochondrion. The chain is Large ribosomal subunit protein uL22m (MRPL22) from Homo sapiens (Human).